The chain runs to 886 residues: Protein translocase subunit SecA (886 aa).

ATP-binding positions include glutamine 85, 103–107 (GEGKT), and aspartate 492. Over residues 841–864 (RVVENRYAEEGPKQPARRENKVGR) the composition is skewed to basic and acidic residues. The segment at 841-866 (RVVENRYAEEGPKQPARRENKVGRND) is disordered. 4 residues coordinate Zn(2+): cysteine 868, cysteine 870, cysteine 879, and cysteine 880.

Belongs to the SecA family. Monomer and homodimer. Part of the essential Sec protein translocation apparatus which comprises SecA, SecYEG and auxiliary proteins SecDF. Other proteins may also be involved. Requires Zn(2+) as cofactor.

It localises to the cell membrane. The protein localises to the cytoplasm. It carries out the reaction ATP + H2O + cellular proteinSide 1 = ADP + phosphate + cellular proteinSide 2.. Functionally, part of the Sec protein translocase complex. Interacts with the SecYEG preprotein conducting channel. Has a central role in coupling the hydrolysis of ATP to the transfer of proteins into and across the cell membrane, serving as an ATP-driven molecular motor driving the stepwise translocation of polypeptide chains across the membrane. This chain is Protein translocase subunit SecA, found in Pelotomaculum thermopropionicum (strain DSM 13744 / JCM 10971 / SI).